Reading from the N-terminus, the 443-residue chain is Probable glycine dehydrogenase (decarboxylating) subunit 1 (443 aa).

This sequence belongs to the GcvP family. N-terminal subunit subfamily. As to quaternary structure, the glycine cleavage system is composed of four proteins: P, T, L and H. In this organism, the P 'protein' is a heterodimer of two subunits.

It carries out the reaction N(6)-[(R)-lipoyl]-L-lysyl-[glycine-cleavage complex H protein] + glycine + H(+) = N(6)-[(R)-S(8)-aminomethyldihydrolipoyl]-L-lysyl-[glycine-cleavage complex H protein] + CO2. In terms of biological role, the glycine cleavage system catalyzes the degradation of glycine. The P protein binds the alpha-amino group of glycine through its pyridoxal phosphate cofactor; CO(2) is released and the remaining methylamine moiety is then transferred to the lipoamide cofactor of the H protein. The chain is Probable glycine dehydrogenase (decarboxylating) subunit 1 from Solidesulfovibrio magneticus (strain ATCC 700980 / DSM 13731 / RS-1) (Desulfovibrio magneticus).